The following is a 109-amino-acid chain: Nucleoid-associated protein MADE_1013280 (109 aa).

The segment at 86-109 (TSKEKMGDVTGGMPLPPGFKMPGF) is disordered. Pro residues predominate over residues 99–109 (PLPPGFKMPGF).

Belongs to the YbaB/EbfC family. Homodimer.

The protein localises to the cytoplasm. The protein resides in the nucleoid. In terms of biological role, binds to DNA and alters its conformation. May be involved in regulation of gene expression, nucleoid organization and DNA protection. This is Nucleoid-associated protein MADE_1013280 from Alteromonas mediterranea (strain DSM 17117 / CIP 110805 / LMG 28347 / Deep ecotype).